A 363-amino-acid polypeptide reads, in one-letter code: UDP-N-acetylglucosamine--N-acetylmuramyl-(pentapeptide) pyrophosphoryl-undecaprenol N-acetylglucosamine transferase (363 aa).

Residues 10 to 12 (TGG), Asn124, Ser195, and Gln295 contribute to the UDP-N-acetyl-alpha-D-glucosamine site.

This sequence belongs to the glycosyltransferase 28 family. MurG subfamily.

The protein localises to the cell membrane. The catalysed reaction is di-trans,octa-cis-undecaprenyl diphospho-N-acetyl-alpha-D-muramoyl-L-alanyl-D-glutamyl-meso-2,6-diaminopimeloyl-D-alanyl-D-alanine + UDP-N-acetyl-alpha-D-glucosamine = di-trans,octa-cis-undecaprenyl diphospho-[N-acetyl-alpha-D-glucosaminyl-(1-&gt;4)]-N-acetyl-alpha-D-muramoyl-L-alanyl-D-glutamyl-meso-2,6-diaminopimeloyl-D-alanyl-D-alanine + UDP + H(+). Its pathway is cell wall biogenesis; peptidoglycan biosynthesis. Functionally, cell wall formation. Catalyzes the transfer of a GlcNAc subunit on undecaprenyl-pyrophosphoryl-MurNAc-pentapeptide (lipid intermediate I) to form undecaprenyl-pyrophosphoryl-MurNAc-(pentapeptide)GlcNAc (lipid intermediate II). The polypeptide is UDP-N-acetylglucosamine--N-acetylmuramyl-(pentapeptide) pyrophosphoryl-undecaprenol N-acetylglucosamine transferase (Bacillus subtilis (strain 168)).